A 100-amino-acid polypeptide reads, in one-letter code: Aspartyl/glutamyl-tRNA(Asn/Gln) amidotransferase subunit C (100 aa).

It belongs to the GatC family. In terms of assembly, heterotrimer of A, B and C subunits.

It catalyses the reaction L-glutamyl-tRNA(Gln) + L-glutamine + ATP + H2O = L-glutaminyl-tRNA(Gln) + L-glutamate + ADP + phosphate + H(+). The enzyme catalyses L-aspartyl-tRNA(Asn) + L-glutamine + ATP + H2O = L-asparaginyl-tRNA(Asn) + L-glutamate + ADP + phosphate + 2 H(+). Its function is as follows. Allows the formation of correctly charged Asn-tRNA(Asn) or Gln-tRNA(Gln) through the transamidation of misacylated Asp-tRNA(Asn) or Glu-tRNA(Gln) in organisms which lack either or both of asparaginyl-tRNA or glutaminyl-tRNA synthetases. The reaction takes place in the presence of glutamine and ATP through an activated phospho-Asp-tRNA(Asn) or phospho-Glu-tRNA(Gln). This chain is Aspartyl/glutamyl-tRNA(Asn/Gln) amidotransferase subunit C, found in Rickettsia bellii (strain RML369-C).